A 223-amino-acid polypeptide reads, in one-letter code: DNA-directed RNA polymerase III subunit RPC7 (223 aa).

Residues 111–124 (MMPRKKCKKGDPKS) are compositionally biased toward basic and acidic residues. A disordered region spans residues 111–223 (MMPRKKCKKG…SDDNMDEATY (113 aa)). Thr134 carries the post-translational modification Phosphothreonine. Residues 144–156 (KTIEELEKRGEGE) show a composition bias toward basic and acidic residues. Position 158 is a phosphoserine (Ser158). Composition is skewed to acidic residues over residues 173–198 (KDDEEDGEEDAEQEDYDEEEQEEEND) and 206–223 (NGDDFGVDSDDNMDEATY).

This sequence belongs to the eukaryotic RPC7 RNA polymerase subunit family. As to quaternary structure, component of the RNA polymerase III complex consisting of 17 subunits: a ten-subunit horseshoe-shaped catalytic core composed of POLR3A/RPC1, POLR3B/RPC2, POLR1C/RPAC1, POLR1D/RPAC2, POLR3K/RPC10, POLR2E/RPABC1, POLR2F/RPABC2, POLR2H/RPABC3, POLR2K/RPABC4 and POLR2L/RPABC5; a mobile stalk composed of two subunits POLR3H/RPC8 and CRCP/RPC9, protruding from the core and functioning primarily in transcription initiation; and additional subunits homologous to general transcription factors of the RNA polymerase II machinery, POLR3C/RPC3-POLR3F/RPC6-POLR3G/RPC7 heterotrimer required for transcription initiation and POLR3D/RPC4-POLR3E/RPC5 heterodimer involved in both transcription initiation and termination. Directly interacts with POLR3C/RPC62. Also found in a trimeric complex with POLR3C/RPC3 and POLR3GL. In terms of tissue distribution, expressed at low levels in the liver.

It is found in the nucleus. The protein resides in the cytoplasm. Its function is as follows. DNA-dependent RNA polymerase catalyzes the transcription of DNA into RNA using the four ribonucleoside triphosphates as substrates. Specific peripheric component of RNA polymerase III (Pol III) which synthesizes small non-coding RNAs including 5S rRNA, snRNAs, tRNAs and miRNAs from at least 500 distinct genomic loci. Acts as a long tether that bridges POLR3C/RPC3-POLR3F/RPC6-POLR3G/RPC7 heterotrimer and the mobile stalk of Pol III, coordinating the dynamics of Pol III stalk and clamp modules during the transition from apo to elongation state. Pol III exists as two alternative complexes defined by the mutually exclusive incorporation of subunit POLR3G/RPC7alpha or POLR3GL/RPC7beta. POLR3G/RPC7alpha modulates Pol III transcriptome by specifically enhancing the transcription of snaR-A non-coding RNAs. At resting state, occupies the active site of apo Pol III and keeps Pol III in an autoinhibitory mode, preventing non-specific transcription. Pol III plays a key role in sensing and limiting infection by intracellular bacteria and DNA viruses. Acts as a nuclear and cytosolic DNA sensor involved in innate immune response. Can sense non-self dsDNA that serves as template for transcription into dsRNA. The non-self RNA polymerase III transcripts, such as Epstein-Barr virus-encoded RNAs (EBERs), induce type I interferon and NF-kappa-B through the RIG-I pathway. This chain is DNA-directed RNA polymerase III subunit RPC7 (Polr3g), found in Mus musculus (Mouse).